The sequence spans 109 residues: Large ribosomal subunit protein uL24 (109 aa).

Residues 1–24 are disordered; it reads MANVTTDIKRNDTVAVTSGKDKGK.

This sequence belongs to the universal ribosomal protein uL24 family. As to quaternary structure, part of the 50S ribosomal subunit.

Functionally, one of two assembly initiator proteins, it binds directly to the 5'-end of the 23S rRNA, where it nucleates assembly of the 50S subunit. In terms of biological role, one of the proteins that surrounds the polypeptide exit tunnel on the outside of the subunit. The protein is Large ribosomal subunit protein uL24 of Koribacter versatilis (strain Ellin345).